The primary structure comprises 37 residues: Translationally-controlled tumor protein homolog (37 aa).

The TCTP domain maps to 1–37; that stretch reads MKIFRDILTNAEVVXDNDKPMDVLDEIVYAXQGRYIE.

The protein belongs to the TCTP family. As to quaternary structure, monomer.

The protein localises to the cytoplasm. Functionally, binds calcium; exact function not known. This Trypanosoma brucei brucei protein is Translationally-controlled tumor protein homolog.